The sequence spans 210 residues: ATP-dependent Clp protease proteolytic subunit (210 aa).

The active-site Nucleophile is the S107. The active site involves H132.

Belongs to the peptidase S14 family. As to quaternary structure, fourteen ClpP subunits assemble into 2 heptameric rings which stack back to back to give a disk-like structure with a central cavity, resembling the structure of eukaryotic proteasomes.

It is found in the cytoplasm. The catalysed reaction is Hydrolysis of proteins to small peptides in the presence of ATP and magnesium. alpha-casein is the usual test substrate. In the absence of ATP, only oligopeptides shorter than five residues are hydrolyzed (such as succinyl-Leu-Tyr-|-NHMec, and Leu-Tyr-Leu-|-Tyr-Trp, in which cleavage of the -Tyr-|-Leu- and -Tyr-|-Trp bonds also occurs).. In terms of biological role, cleaves peptides in various proteins in a process that requires ATP hydrolysis. Has a chymotrypsin-like activity. Plays a major role in the degradation of misfolded proteins. The protein is ATP-dependent Clp protease proteolytic subunit of Cereibacter sphaeroides (strain ATCC 17025 / ATH 2.4.3) (Rhodobacter sphaeroides).